Reading from the N-terminus, the 89-residue chain is Small ribosomal subunit protein uS15 (89 aa).

Belongs to the universal ribosomal protein uS15 family. In terms of assembly, part of the 30S ribosomal subunit. Forms a bridge to the 50S subunit in the 70S ribosome, contacting the 23S rRNA.

Functionally, one of the primary rRNA binding proteins, it binds directly to 16S rRNA where it helps nucleate assembly of the platform of the 30S subunit by binding and bridging several RNA helices of the 16S rRNA. Forms an intersubunit bridge (bridge B4) with the 23S rRNA of the 50S subunit in the ribosome. The polypeptide is Small ribosomal subunit protein uS15 (Orientia tsutsugamushi (strain Ikeda) (Rickettsia tsutsugamushi)).